The chain runs to 352 residues: Zinc transporter 1 (352 aa).

Residues Met-1–Gly-29 form the signal peptide. Topologically, residues His-30–Gly-56 are extracellular. The chain crosses the membrane as a helical span at residues Leu-57–Val-77. The Cytoplasmic segment spans residues Ser-78–Ser-87. A helical transmembrane segment spans residues Phe-88–Phe-108. At Leu-109 to Ser-127 the chain is on the extracellular side. The helical transmembrane segment at Phe-128–Val-148 threads the bilayer. Residues Ala-149 to Asp-200 lie on the Cytoplasmic side of the membrane. The chain crosses the membrane as a helical span at residues Ala-201–Val-221. Topologically, residues Ser-222–Arg-230 are extracellular. The helical transmembrane segment at Asn-231 to Leu-251 threads the bilayer. Residues Arg-252–Thr-262 are Cytoplasmic-facing. A helical transmembrane segment spans residues Val-263–Ile-283. Topologically, residues Asp-284–Tyr-296 are extracellular. A helical transmembrane segment spans residues Ala-297–Ala-317. Residues Lys-318–Lys-330 are Cytoplasmic-facing. A helical transmembrane segment spans residues Pro-331–Trp-351. Residue Asp-352 is a topological domain, extracellular.

This sequence belongs to the ZIP transporter (TC 2.A.5) family. As to expression, expressed in vascular bundles of roots and leaves.

Its subcellular location is the cell membrane. Functionally, zinc transporter that may mediate zinc uptake from the rhizosphere. May also transport other divalent cations. In Oryza sativa subsp. japonica (Rice), this protein is Zinc transporter 1 (ZIP1).